Consider the following 427-residue polypeptide: Glutamate-1-semialdehyde 2,1-aminomutase (427 aa).

K265 bears the N6-(pyridoxal phosphate)lysine mark.

Belongs to the class-III pyridoxal-phosphate-dependent aminotransferase family. HemL subfamily. In terms of assembly, homodimer. It depends on pyridoxal 5'-phosphate as a cofactor.

It is found in the cytoplasm. The catalysed reaction is (S)-4-amino-5-oxopentanoate = 5-aminolevulinate. It participates in porphyrin-containing compound metabolism; protoporphyrin-IX biosynthesis; 5-aminolevulinate from L-glutamyl-tRNA(Glu): step 2/2. The protein is Glutamate-1-semialdehyde 2,1-aminomutase of Bordetella bronchiseptica (strain ATCC BAA-588 / NCTC 13252 / RB50) (Alcaligenes bronchisepticus).